The sequence spans 150 residues: Large ribosomal subunit protein bL9 (150 aa).

The protein belongs to the bacterial ribosomal protein bL9 family.

Functionally, binds to the 23S rRNA. The sequence is that of Large ribosomal subunit protein bL9 from Leuconostoc citreum (strain KM20).